The sequence spans 319 residues: Zinc finger protein-like 1 homolog (319 aa).

The B box-type; degenerate zinc finger occupies 1–43 (MGLCKCPKRKVTNLFCYEHRVNVCEFCLVDNHPNCVVQSYLNW). Residues 53-101 (CSLCHTTLTQGETIRLNCLHLLHWRCFDDWAASFPPTTAPAGYRCPCCS) form an RING-type; atypical zinc finger. The segment at 212 to 232 (ESSSDTRPLLRQDRDADNEEN) is disordered. The segment covering 219-232 (PLLRQDRDADNEEN) has biased composition (basic and acidic residues). A helical transmembrane segment spans residues 264-284 (KMAIFVMFLALLALITIITVL).

This sequence belongs to the ZFPL1 family.

It is found in the membrane. This Caenorhabditis briggsae protein is Zinc finger protein-like 1 homolog.